The sequence spans 87 residues: Small ribosomal subunit protein bS18B (87 aa).

This sequence belongs to the bacterial ribosomal protein bS18 family. As to quaternary structure, part of the 30S ribosomal subunit. Forms a tight heterodimer with protein bS6.

Binds as a heterodimer with protein bS6 to the central domain of the 16S rRNA, where it helps stabilize the platform of the 30S subunit. The polypeptide is Small ribosomal subunit protein bS18B (Mycobacterium marinum (strain ATCC BAA-535 / M)).